The following is a 300-amino-acid chain: 4-hydroxy-tetrahydrodipicolinate synthase (300 aa).

Threonine 56 contributes to the pyruvate binding site. The Proton donor/acceptor role is filled by tyrosine 145. Catalysis depends on lysine 173, which acts as the Schiff-base intermediate with substrate. Valine 215 provides a ligand contact to pyruvate.

It belongs to the DapA family. As to quaternary structure, homotetramer; dimer of dimers.

The protein resides in the cytoplasm. The enzyme catalyses L-aspartate 4-semialdehyde + pyruvate = (2S,4S)-4-hydroxy-2,3,4,5-tetrahydrodipicolinate + H2O + H(+). Its pathway is amino-acid biosynthesis; L-lysine biosynthesis via DAP pathway; (S)-tetrahydrodipicolinate from L-aspartate: step 3/4. Functionally, catalyzes the condensation of (S)-aspartate-beta-semialdehyde [(S)-ASA] and pyruvate to 4-hydroxy-tetrahydrodipicolinate (HTPA). The polypeptide is 4-hydroxy-tetrahydrodipicolinate synthase (Prochlorococcus marinus (strain AS9601)).